A 499-amino-acid chain; its full sequence is Fumarate hydratase 2 (499 aa).

The interval 19–51 is disordered; that stretch reads ADVTLKQEDEQQERRSYSTPFREERDTFGPIQV. The span at 23 to 45 shows a compositional bias: basic and acidic residues; it reads LKQEDEQQERRSYSTPFREERDT. Substrate-binding positions include 134 to 136, 164 to 167, 174 to 176, and threonine 222; these read SGT, HPND, and SSN. Histidine 223 (proton donor/acceptor) is an active-site residue. Residue serine 353 is part of the active site. Substrate contacts are provided by residues serine 354 and 359-361; that span reads KVN.

It belongs to the class-II fumarase/aspartase family. Fumarase subfamily. In terms of assembly, homotetramer.

Its subcellular location is the cytoplasm. The protein resides in the cytosol. It carries out the reaction (S)-malate = fumarate + H2O. Its activity is regulated as follows. Fumarate hydratase activity (fumarate to L-malate) is strongly inhibited by phosphoenolpyruvate, citrate, oxaloacetate, ATP and ADP. Malate dehydratase activity (malate to fumarate) is activated by oxaloacetate, Asn and Gln. Malate dehydratase activity (malate to fumarate) is inhibited by citrate, succinate, ADP and ATP. Cytosolic fumarate hydratase that catalyzes the reversible stereospecific interconversion of fumarate to L-malate. Catalyzes the dehydration of L-malate to fumarate in the cytosol: required for the massive fumarate accumulation during the day in plants grown under high nitrogen. Also required for acclimation of photosynthesis to cold: acts by mediating accumulation of fumarate at low temperature, leading to reduce accumulation of phosphorylated sugars. This is Fumarate hydratase 2 from Arabidopsis thaliana (Mouse-ear cress).